The following is a 253-amino-acid chain: 3-deoxy-manno-octulosonate cytidylyltransferase (253 aa).

It belongs to the KdsB family.

It localises to the cytoplasm. It carries out the reaction 3-deoxy-alpha-D-manno-oct-2-ulosonate + CTP = CMP-3-deoxy-beta-D-manno-octulosonate + diphosphate. The protein operates within nucleotide-sugar biosynthesis; CMP-3-deoxy-D-manno-octulosonate biosynthesis; CMP-3-deoxy-D-manno-octulosonate from 3-deoxy-D-manno-octulosonate and CTP: step 1/1. It functions in the pathway bacterial outer membrane biogenesis; lipopolysaccharide biosynthesis. Its function is as follows. Activates KDO (a required 8-carbon sugar) for incorporation into bacterial lipopolysaccharide in Gram-negative bacteria. The polypeptide is 3-deoxy-manno-octulosonate cytidylyltransferase (Acidithiobacillus ferrooxidans (strain ATCC 23270 / DSM 14882 / CIP 104768 / NCIMB 8455) (Ferrobacillus ferrooxidans (strain ATCC 23270))).